Reading from the N-terminus, the 158-residue chain is Ethylene-responsive transcription factor ERF120 (158 aa).

The segment at residues 86–147 (KHKGVRKKPS…SARRGTKNGE (62 aa)) is a DNA-binding region (AP2/ERF). Residues 134-158 (VGRRSARRGTKNGEEASTKKTTEKN) form a disordered region. The span at 144-158 (KNGEEASTKKTTEKN) shows a compositional bias: basic and acidic residues.

Belongs to the AP2/ERF transcription factor family. ERF subfamily.

The protein resides in the nucleus. Probably acts as a transcriptional activator. Binds to the GCC-box pathogenesis-related promoter element. May be involved in the regulation of gene expression by stress factors and by components of stress signal transduction pathways. In Arabidopsis thaliana (Mouse-ear cress), this protein is Ethylene-responsive transcription factor ERF120 (ERF120).